The following is a 33-amino-acid chain: Toxin BcV (33 aa).

The cysteines at positions 6 and 30 are disulfide-linked.

The protein localises to the secreted. It is found in the nematocyst. Potently and reversibly blocks mammalian Kv11/KCNH/ERG voltage-gated potassium channels. Acts as a gating-modifier toxin that shifts the voltage-dependence of ERG activation in the positive direction and suppresses its current amplitudes elicited by strong depolarizing pulses that maximally activate the channels. The polypeptide is Toxin BcV (Bunodosoma caissarum (Sea anemone)).